The primary structure comprises 179 residues: MNRLKEKFNSEVTQNLVKQFDYSSVMEVPKIEKIVVNMGVGDAVQNTKVLDDAVEELQAITGQKPLITKAKKSVATFRLREGMPIGAKVTLRGERMYDFLDKLIAVSLPRVRDFQGVSKTAFDGRGNYTLGVKEQLIFPEIDYDRVNKVRGMDIVIVTTANTDEEARELLSQFGMPFHK.

It belongs to the universal ribosomal protein uL5 family. As to quaternary structure, part of the 50S ribosomal subunit; part of the 5S rRNA/L5/L18/L25 subcomplex. Contacts the 5S rRNA and the P site tRNA. Forms a bridge to the 30S subunit in the 70S ribosome.

In terms of biological role, this is one of the proteins that bind and probably mediate the attachment of the 5S RNA into the large ribosomal subunit, where it forms part of the central protuberance. In the 70S ribosome it contacts protein S13 of the 30S subunit (bridge B1b), connecting the 2 subunits; this bridge is implicated in subunit movement. Contacts the P site tRNA; the 5S rRNA and some of its associated proteins might help stabilize positioning of ribosome-bound tRNAs. This is Large ribosomal subunit protein uL5 from Staphylococcus saprophyticus subsp. saprophyticus (strain ATCC 15305 / DSM 20229 / NCIMB 8711 / NCTC 7292 / S-41).